A 320-amino-acid chain; its full sequence is uncharacterized protein (320 aa).

46 to 53 (DVPGVGKT) lines the ATP pocket.

It belongs to the MoxR family.

This is an uncharacterized protein from Bacillus subtilis (strain 168).